Here is a 347-residue protein sequence, read N- to C-terminus: Lipopolysaccharide core heptosyltransferase OpsX (347 aa).

It belongs to the glycosyltransferase 9 family.

Its pathway is bacterial outer membrane biogenesis; LPS core biosynthesis. Catalyzes heptose transfer to the lipopolysaccharide core. It transfers the first L-glycero-D-manno-heptose to the phosphorylated 3-deoxy-alpha-D-manno-octulosonic acid (Kdo-P) of the inner core. This Haemophilus influenzae (strain ATCC 51907 / DSM 11121 / KW20 / Rd) protein is Lipopolysaccharide core heptosyltransferase OpsX.